The following is a 303-amino-acid chain: Oxygen-dependent coproporphyrinogen-III oxidase (303 aa).

Substrate is bound at residue Ser93. 2 residues coordinate a divalent metal cation: His97 and His107. His107 functions as the Proton donor in the catalytic mechanism. Residue 109–111 (NVR) coordinates substrate. Residues His149 and His179 each contribute to the a divalent metal cation site. The important for dimerization stretch occupies residues 244 to 279 (YVEFNLVFDRGTLFGLQSGGRTESILLSMPPLAQWR). 262-264 (GGR) is a substrate binding site.

The protein belongs to the aerobic coproporphyrinogen-III oxidase family. As to quaternary structure, homodimer. Requires a divalent metal cation as cofactor.

It localises to the cytoplasm. It carries out the reaction coproporphyrinogen III + O2 + 2 H(+) = protoporphyrinogen IX + 2 CO2 + 2 H2O. It participates in porphyrin-containing compound metabolism; protoporphyrin-IX biosynthesis; protoporphyrinogen-IX from coproporphyrinogen-III (O2 route): step 1/1. Functionally, involved in the heme biosynthesis. Catalyzes the aerobic oxidative decarboxylation of propionate groups of rings A and B of coproporphyrinogen-III to yield the vinyl groups in protoporphyrinogen-IX. The sequence is that of Oxygen-dependent coproporphyrinogen-III oxidase from Bordetella parapertussis (strain 12822 / ATCC BAA-587 / NCTC 13253).